The primary structure comprises 393 residues: MTGPLAAARSVAATKSMTAPTVDERPDIKKGLAGVVVDTTAISKVVPQTNSLTYRGYPVQDLAARCSFEQVAFLLWRGELPTDAELALFSQRERASRRVDRSMLSLLAKLPDNCHPMDVVRTAISYLGAEDPDEDDAAANRAKAMRMMAVLPTIVAIDMRRRRGLPPIAPHSGLGYAQNFLHMCFGEVPETAVVSAFEQSMILYAEHGFNASTFAARVVTSTQSDIYSAVTGAIGALKGRLHGGANEAVMHDMIEIGDPANAREWLRAKLARKEKIMGFGHRVYRHGDSRVPTMKRALERVGTVRDGQRWLDIYQVLAAEMASATGILPNLDFPTGPAYYLMGFDIASFTPIFVMSRITGWTAHIMEQATANALIRPLSAYCGHEQRVLPGTF.

Residues Arg-92 and His-207 each coordinate substrate. Residue His-242 is part of the active site. 275–279 (KIMGF) lines the CoA pocket. The active site involves His-281. Arg-290 provides a ligand contact to substrate. Asp-332 is a catalytic residue. Residues Arg-357 and Arg-376 each coordinate substrate.

Belongs to the citrate synthase family. In terms of assembly, homodimer.

It carries out the reaction propanoyl-CoA + oxaloacetate + H2O = (2S,3S)-2-methylcitrate + CoA + H(+). It catalyses the reaction oxaloacetate + acetyl-CoA + H2O = citrate + CoA + H(+). Its pathway is organic acid metabolism; propanoate degradation. It participates in carbohydrate metabolism; tricarboxylic acid cycle; isocitrate from oxaloacetate: step 1/2. In terms of biological role, involved in the catabolism of short chain fatty acids (SCFA) via the tricarboxylic acid (TCA)(acetyl degradation route) and via the 2-methylcitrate cycle I (propionate degradation route). Catalyzes the Claisen condensation of propionyl-CoA and oxaloacetate (OAA) to yield 2-methylcitrate (2-MC) and CoA. Also catalyzes the condensation of oxaloacetate with acetyl-CoA. The protein is 2-methylcitrate synthase (gltA1) of Mycobacterium tuberculosis (strain ATCC 35801 / TMC 107 / Erdman).